The following is a 191-amino-acid chain: MKTLLRASLVLFLSLTLLTGVAYPLLVTGLGQVLFPAQAAGSLLFRDGRPIGSSLIGQPFGAARYIWGRPSATAPTPNNAQASGGSNLGPSNPVLLQAVEARIAALRAADPGNTLPIPVDLVTASASGLDPEISLAGARYQAARVARARGLSEAEVLALIDQHARGRWFGFLGEPRVNVLALNLTLDGRRP.

A helical membrane pass occupies residues 7–27 (ASLVLFLSLTLLTGVAYPLLV).

Belongs to the KdpC family. As to quaternary structure, the system is composed of three essential subunits: KdpA, KdpB and KdpC.

It is found in the cell inner membrane. Part of the high-affinity ATP-driven potassium transport (or Kdp) system, which catalyzes the hydrolysis of ATP coupled with the electrogenic transport of potassium into the cytoplasm. This subunit acts as a catalytic chaperone that increases the ATP-binding affinity of the ATP-hydrolyzing subunit KdpB by the formation of a transient KdpB/KdpC/ATP ternary complex. The chain is Potassium-transporting ATPase KdpC subunit from Methylibium petroleiphilum (strain ATCC BAA-1232 / LMG 22953 / PM1).